Here is a 178-residue protein sequence, read N- to C-terminus: Adenine phosphoribosyltransferase (178 aa).

This sequence belongs to the purine/pyrimidine phosphoribosyltransferase family. In terms of assembly, homodimer.

Its subcellular location is the cytoplasm. The catalysed reaction is AMP + diphosphate = 5-phospho-alpha-D-ribose 1-diphosphate + adenine. It participates in purine metabolism; AMP biosynthesis via salvage pathway; AMP from adenine: step 1/1. In terms of biological role, catalyzes a salvage reaction resulting in the formation of AMP, that is energically less costly than de novo synthesis. This Erythrobacter litoralis (strain HTCC2594) protein is Adenine phosphoribosyltransferase.